We begin with the raw amino-acid sequence, 182 residues long: Spermatophorin SP23 (182 aa).

A signal peptide spans 1–7 (MVASIAG). 3 disordered regions span residues 1-26 (MVAS…FQPY), 56-79 (FQTI…NSIE), and 104-136 (IVVN…PPTI). Positions 109 to 128 (APPPPPVIYQAPPPPPPPPI) are enriched in pro residues.

In terms of tissue distribution, spermatophore.

The protein localises to the secreted. In terms of biological role, structural protein of a layer within the wall of the spermatophore produced probably by cell type 4 of the bean-shaped gland (BAG). Fixation in the spermatophore seems to require covalent cross-linking of spermatophorins. The chain is Spermatophorin SP23 (SP23) from Tenebrio molitor (Yellow mealworm beetle).